We begin with the raw amino-acid sequence, 142 residues long: Hemoglobin subunit alpha-4 (142 aa).

The residue at position 1 (serine 1) is an N-acetylserine. Residues 1-142 form the Globin domain; that stretch reads SLSAKDKANV…LALALAEKYR (142 aa). Position 59 (histidine 59) interacts with O2. Residue histidine 88 participates in heme b binding.

It belongs to the globin family. In terms of assembly, heterotetramer of two alpha chains and two beta chains. In terms of tissue distribution, red blood cells.

Functionally, involved in oxygen transport from gills to the various peripheral tissues. In Oncorhynchus mykiss (Rainbow trout), this protein is Hemoglobin subunit alpha-4 (hba4).